Consider the following 249-residue polypeptide: DNA polymerase sliding clamp (249 aa).

Belongs to the PCNA family. Homotrimer. The subunits circularize to form a toroid; DNA passes through its center. Replication factor C (RFC) is required to load the toroid on the DNA.

In terms of biological role, sliding clamp subunit that acts as a moving platform for DNA processing. Responsible for tethering the catalytic subunit of DNA polymerase and other proteins to DNA during high-speed replication. The chain is DNA polymerase sliding clamp from Thermococcus onnurineus (strain NA1).